The sequence spans 180 residues: Crossover junction endodeoxyribonuclease RuvC (180 aa).

Active-site residues include Asp7, Glu66, and Asp138. Residues Asp7, Glu66, and Asp138 each coordinate Mg(2+).

This sequence belongs to the RuvC family. As to quaternary structure, homodimer which binds Holliday junction (HJ) DNA. The HJ becomes 2-fold symmetrical on binding to RuvC with unstacked arms; it has a different conformation from HJ DNA in complex with RuvA. In the full resolvosome a probable DNA-RuvA(4)-RuvB(12)-RuvC(2) complex forms which resolves the HJ. It depends on Mg(2+) as a cofactor.

The protein localises to the cytoplasm. It catalyses the reaction Endonucleolytic cleavage at a junction such as a reciprocal single-stranded crossover between two homologous DNA duplexes (Holliday junction).. The RuvA-RuvB-RuvC complex processes Holliday junction (HJ) DNA during genetic recombination and DNA repair. Endonuclease that resolves HJ intermediates. Cleaves cruciform DNA by making single-stranded nicks across the HJ at symmetrical positions within the homologous arms, yielding a 5'-phosphate and a 3'-hydroxyl group; requires a central core of homology in the junction. The consensus cleavage sequence is 5'-(A/T)TT(C/G)-3'. Cleavage occurs on the 3'-side of the TT dinucleotide at the point of strand exchange. HJ branch migration catalyzed by RuvA-RuvB allows RuvC to scan DNA until it finds its consensus sequence, where it cleaves and resolves the cruciform DNA. This is Crossover junction endodeoxyribonuclease RuvC from Burkholderia pseudomallei (strain 1710b).